The chain runs to 439 residues: Ribosomal protein uS12 methylthiotransferase RimO (439 aa).

The MTTase N-terminal domain occupies 5–115; the sequence is PRISFTSLGC…VLDAVHRALP (111 aa). Cysteine 14, cysteine 50, cysteine 79, cysteine 146, cysteine 150, and cysteine 153 together coordinate [4Fe-4S] cluster. A Radical SAM core domain is found at 132 to 369; sequence LTPRHYAYLK…MARQQKISAR (238 aa). The 67-residue stretch at 372 to 438 folds into the TRAM domain; the sequence is KRKVGTRQQI…QYDLHGSVAG (67 aa).

It belongs to the methylthiotransferase family. RimO subfamily. [4Fe-4S] cluster serves as cofactor.

The protein localises to the cytoplasm. It catalyses the reaction L-aspartate(89)-[ribosomal protein uS12]-hydrogen + (sulfur carrier)-SH + AH2 + 2 S-adenosyl-L-methionine = 3-methylsulfanyl-L-aspartate(89)-[ribosomal protein uS12]-hydrogen + (sulfur carrier)-H + 5'-deoxyadenosine + L-methionine + A + S-adenosyl-L-homocysteine + 2 H(+). Its function is as follows. Catalyzes the methylthiolation of an aspartic acid residue of ribosomal protein uS12. The polypeptide is Ribosomal protein uS12 methylthiotransferase RimO (Bradyrhizobium diazoefficiens (strain JCM 10833 / BCRC 13528 / IAM 13628 / NBRC 14792 / USDA 110)).